We begin with the raw amino-acid sequence, 95 residues long: Aspartyl/glutamyl-tRNA(Asn/Gln) amidotransferase subunit C (95 aa).

The protein belongs to the GatC family. Heterotrimer of A, B and C subunits.

It catalyses the reaction L-glutamyl-tRNA(Gln) + L-glutamine + ATP + H2O = L-glutaminyl-tRNA(Gln) + L-glutamate + ADP + phosphate + H(+). It carries out the reaction L-aspartyl-tRNA(Asn) + L-glutamine + ATP + H2O = L-asparaginyl-tRNA(Asn) + L-glutamate + ADP + phosphate + 2 H(+). Functionally, allows the formation of correctly charged Asn-tRNA(Asn) or Gln-tRNA(Gln) through the transamidation of misacylated Asp-tRNA(Asn) or Glu-tRNA(Gln) in organisms which lack either or both of asparaginyl-tRNA or glutaminyl-tRNA synthetases. The reaction takes place in the presence of glutamine and ATP through an activated phospho-Asp-tRNA(Asn) or phospho-Glu-tRNA(Gln). This Ruegeria pomeroyi (strain ATCC 700808 / DSM 15171 / DSS-3) (Silicibacter pomeroyi) protein is Aspartyl/glutamyl-tRNA(Asn/Gln) amidotransferase subunit C.